The following is a 292-amino-acid chain: Non-homologous end joining protein Ku (292 aa).

The Ku domain occupies 12–196 (KLSLVTCPVV…KITKDMVELA (185 aa)). Positions 231-292 (KPIKLPEPEE…RSAARQRKAG (62 aa)) are disordered. Positions 271–292 (APAHRRPAKKAHRSAARQRKAG) are enriched in basic residues.

The protein belongs to the prokaryotic Ku family. In terms of assembly, homodimer. Interacts with LigD.

Functionally, with LigD forms a non-homologous end joining (NHEJ) DNA repair enzyme, which repairs dsDNA breaks with reduced fidelity. Binds linear dsDNA with 5'- and 3'- overhangs but not closed circular dsDNA nor ssDNA. Recruits and stimulates the ligase activity of LigD. This Bradyrhizobium sp. (strain ORS 278) protein is Non-homologous end joining protein Ku.